A 445-amino-acid chain; its full sequence is MGDPRTGAPLDDGGGWTGSEEGSEEGTGGSEGVGGDGSPDAEGVWSPDIEQSFQEALAIYPPCGRRKIILSDEGKMYGRNELIARYIKLRTGKTRTRKQVSSHIQVLARRKSREIQSKLKDQVSKDKAFQTMATMSSAQLISAPSLQAKLGPSGPQATELFQFWSGSSGPPWNVPDVKPFSQAPFSVSLTPPASDLPGYEPPPALSPLPPPAPSPPAWQARALGTARLQLIEFSAFVEPPDAVDSFQRHLFVHISQQCPSPGAPPLESVDVRQIYDKFPEKKGGLRELYDRGPPHAFFLVKFWADLNWGPSAEEAGSSGGGGGFYGVSSQYESRELMTLTCSSKVCSFGKQVVEKVETERAQLEDGRFVYRLLRSPMCEYLVNFLHKLRQLPERYMMNSVLENFTILQVVTNRDTQELLLCTAYVFEVSTSERGAQYHIYRLVRD.

Disordered regions lie at residues 1 to 47 and 191 to 217; these read MGDP…VWSP and PPAS…SPPA. A compositionally biased stretch (gly residues) spans 25–37; that stretch reads EGTGGSEGVGGDG. The TEA DNA-binding region spans 38–114; sequence SPDAEGVWSP…QVLARRKSRE (77 aa). The interval 172 to 445 is transcriptional activation; it reads WNVPDVKPFS…QYHIYRLVRD (274 aa). Over residues 199-216 the composition is skewed to pro residues; it reads YEPPPALSPLPPPAPSPP.

In terms of assembly, interacts with YAP1 and WWTR1/TAZ. Highest expression in brain. High levels also found in lung, testis and ovarian follicle cells. Lower levels in heart and spleen.

It is found in the nucleus. In terms of biological role, transcription factor which plays a key role in the Hippo signaling pathway, a pathway involved in organ size control and tumor suppression by restricting proliferation and promoting apoptosis. The core of this pathway is composed of a kinase cascade wherein MST1/MST2, in complex with its regulatory protein SAV1, phosphorylates and activates LATS1/2 in complex with its regulatory protein MOB1, which in turn phosphorylates and inactivates YAP1 oncoprotein and WWTR1/TAZ. Acts by mediating gene expression of YAP1 and WWTR1/TAZ, thereby regulating cell proliferation, migration and epithelial mesenchymal transition (EMT) induction. Binds to the SPH and GT-IIC 'enhansons' (5'-GTGGAATGT-3'). May be involved in the gene regulation of neural development. Binds to the M-CAT motif. The protein is Transcriptional enhancer factor TEF-4 (Tead2) of Mus musculus (Mouse).